Consider the following 155-residue polypeptide: Ribosomal RNA large subunit methyltransferase H (155 aa).

S-adenosyl-L-methionine contacts are provided by residues Leu-72, Gly-103, and 122 to 127; that span reads LSPLTL.

Belongs to the RNA methyltransferase RlmH family. Homodimer.

Its subcellular location is the cytoplasm. It carries out the reaction pseudouridine(1915) in 23S rRNA + S-adenosyl-L-methionine = N(3)-methylpseudouridine(1915) in 23S rRNA + S-adenosyl-L-homocysteine + H(+). Functionally, specifically methylates the pseudouridine at position 1915 (m3Psi1915) in 23S rRNA. This Histophilus somni (strain 2336) (Haemophilus somnus) protein is Ribosomal RNA large subunit methyltransferase H.